We begin with the raw amino-acid sequence, 532 residues long: Wee1-like protein kinase 2 (532 aa).

Residues 123 to 166 (INPFTPDTVRRNSEHYKRKSQRSDDDEDYGPRSKEIQNSSEDES) are disordered. The Protein kinase domain maps to 188–465 (FLELACIGVG…RHDVLCKERA (278 aa)). Residues 194–202 (IGVGEFGSV) and Lys217 contribute to the ATP site. Residue Asp315 is the Proton acceptor of the active site. Mg(2+) contacts are provided by Asn320 and Asp354. A coiled-coil region spans residues 469–495 (ATQLRKELNVEKFRTAMLERELKEARL).

This sequence belongs to the protein kinase superfamily. Ser/Thr protein kinase family. WEE1 subfamily.

Its subcellular location is the nucleus. It catalyses the reaction L-tyrosyl-[protein] + ATP = O-phospho-L-tyrosyl-[protein] + ADP + H(+). Functionally, oocyte-specific protein tyrosine kinase that phosphorylates and inhibits cdk1 and acts as a key regulator of meiosis. Required to maintain meiotic arrest in oocytes by phosphorylating cdk1 at 'Tyr-15', leading to inhibit cdk1 activity and prevent meiotic reentry. The chain is Wee1-like protein kinase 2 (wee2) from Danio rerio (Zebrafish).